The chain runs to 105 residues: Heat shock protein HspQ (105 aa).

The protein belongs to the HspQ family.

The protein localises to the cytoplasm. Functionally, involved in the degradation of certain denaturated proteins, including DnaA, during heat shock stress. The polypeptide is Heat shock protein HspQ (Yersinia enterocolitica serotype O:8 / biotype 1B (strain NCTC 13174 / 8081)).